We begin with the raw amino-acid sequence, 342 residues long: Protein-glutamate methylesterase/protein-glutamine glutaminase 2 (342 aa).

Positions 2–119 (NIGIVNDLPL…GGSADPSQPL (118 aa)) constitute a Response regulatory domain. Asp53 bears the 4-aspartylphosphate mark. The CheB-type methylesterase domain occupies 144–337 (PAPQGALPPL…DQLISLVQRN (194 aa)). Active-site residues include Ser159, His186, and Asp279.

It belongs to the CheB family. Post-translationally, phosphorylated by CheA. Phosphorylation of the N-terminal regulatory domain activates the methylesterase activity.

It localises to the cytoplasm. The enzyme catalyses [protein]-L-glutamate 5-O-methyl ester + H2O = L-glutamyl-[protein] + methanol + H(+). The catalysed reaction is L-glutaminyl-[protein] + H2O = L-glutamyl-[protein] + NH4(+). Involved in chemotaxis. Part of a chemotaxis signal transduction system that modulates chemotaxis in response to various stimuli. Catalyzes the demethylation of specific methylglutamate residues introduced into the chemoreceptors (methyl-accepting chemotaxis proteins or MCP) by CheR. Also mediates the irreversible deamidation of specific glutamine residues to glutamic acid. The chain is Protein-glutamate methylesterase/protein-glutamine glutaminase 2 from Burkholderia mallei (strain ATCC 23344).